We begin with the raw amino-acid sequence, 427 residues long: 3-phosphoshikimate 1-carboxyvinyltransferase (427 aa).

K20 serves as a coordination point for phosphoenolpyruvate. S21 and R25 together coordinate 3-phosphoshikimate. G92 and R120 together coordinate phosphoenolpyruvate. Positions 166, 167, 168, 312, and 339 each coordinate 3-phosphoshikimate. Phosphoenolpyruvate is bound at residue Q168. Residue D312 is the Proton acceptor of the active site. Positions 343 and 385 each coordinate phosphoenolpyruvate.

In terms of assembly, homotetramer.

It localises to the cytoplasm. The enzyme catalyses 3-phosphoshikimate + phosphoenolpyruvate = 5-O-(1-carboxyvinyl)-3-phosphoshikimate + phosphate. It participates in metabolic intermediate biosynthesis; chorismate biosynthesis; chorismate from D-erythrose 4-phosphate and phosphoenolpyruvate: step 6/7. Competitively inhibited by glyphosate. Activated by ammonium, rubidium or potassium ions. Functionally, catalyzes the transfer of the enolpyruvyl moiety of phosphoenolpyruvate (PEP) to the 5-hydroxyl of shikimate-3-phosphate (S3P) to produce enolpyruvyl shikimate-3-phosphate and inorganic phosphate. The chain is 3-phosphoshikimate 1-carboxyvinyltransferase from Streptococcus pneumoniae serotype 4 (strain ATCC BAA-334 / TIGR4).